The following is a 230-amino-acid chain: Response regulator MprA (230 aa).

Positions 4 to 118 (RILVVDDDRA…ELLARMRALL (115 aa)) constitute a Response regulatory domain. Position 48 is a 4-aspartylphosphate (Asp-48). The segment at residues 129 to 227 (SPALTFLDLT…VRGVGYVLRE (99 aa)) is a DNA-binding region (ompR/PhoB-type).

Phosphorylated and dephosphorylated by MprB.

The protein resides in the cytoplasm. Functionally, member of the two-component regulatory system MprB/MprA which contributes to maintaining a balance among several systems involved in stress resistance and is required for establishment and maintenance of persistent infection in the host. Functions as a transcriptional regulator that recognizes a 19-bp nucleotide motif comprizing two loosely conserved 8-bp direct DNA-binding motif repeats separated by a 3-bp spacer region. The protein is Response regulator MprA (mprA) of Mycobacterium sp. (strain JLS).